Reading from the N-terminus, the 88-residue chain is MKTVLIALLRFYKVAVSPMLGNRCRFYPSCSDYAREAIQYHGAARGTYLAVRRVCRCHPFSAGGIDLVPPPNSDTRARGEADARSHRL.

The tract at residues 68 to 88 (VPPPNSDTRARGEADARSHRL) is disordered. The span at 75 to 88 (TRARGEADARSHRL) shows a compositional bias: basic and acidic residues.

It belongs to the UPF0161 family.

It localises to the cell inner membrane. Functionally, could be involved in insertion of integral membrane proteins into the membrane. The sequence is that of Putative membrane protein insertion efficiency factor from Burkholderia cenocepacia (strain ATCC BAA-245 / DSM 16553 / LMG 16656 / NCTC 13227 / J2315 / CF5610) (Burkholderia cepacia (strain J2315)).